The sequence spans 531 residues: MEAPAQKAGQGGLPKADAQGASGAREKRPEEPRPLEEDRAGSRPTQKGDLRGAAGGRTTPPGGGSRGCSLGVSPGPGTRHSAGTRPLVREPCGPTSSQNPELVIPEGLQAREGPCRSPARGGDCSRNSCLAWHRGAPAGETPPVCDPCPERIQNHPRTQLCEVHTDCWPCQPGTGAPTCPRTPKPTSRGRNPLVEQPRACACGEAFAWRALRIPQERLQATEEPRPCARCGKRFRPNQQQQAGKSPPVCPECGQTSRPRPIVPDPPAQRLYACDECGKAFTRTSSLLQHQRIHTGERPYECAECGKAFVRCSGLYRHQKTHSAERHRRGPVLARRAFRLGCPPCGDYSERSPRRGSGAGEKPYECADCAKAFGLFSHLVEHRRVHTGEKPYACPECGKAFNQRSNLSRHQRTHSSAKPYACPLCEKAFKGRSGLVQHQRAHTGERPYGCSECGKTFRGCSELRQHERLHSGEKPYICRDCGKAFVRNCSLVRHLRTHTGERPYACGDCGRAFSQRSNLNEHRKRHGGRAAP.

Positions 1–101 (MEAPAQKAGQ…CGPTSSQNPE (101 aa)) are disordered. The span at 24–50 (AREKRPEEPRPLEEDRAGSRPTQKGDL) shows a compositional bias: basic and acidic residues. 8 consecutive C2H2-type zinc fingers follow at residues 271-293 (YACD…QRIH), 299-321 (YECA…QKTH), 363-385 (YECA…RRVH), 391-413 (YACP…QRTH), 419-441 (YACP…QRAH), 447-469 (YGCS…ERLH), 475-497 (YICR…LRTH), and 503-525 (YACG…RKRH).

This sequence belongs to the krueppel C2H2-type zinc-finger protein family.

It localises to the nucleus. May be involved in transcriptional regulation. In Homo sapiens (Human), this protein is Zinc finger protein 837 (ZNF837).